The primary structure comprises 416 residues: Glutamyl-tRNA reductase (416 aa).

Substrate is bound by residues 49–52 (TCNR), Ser-105, 110–112 (EPQ), and Gln-116. Cys-50 serves as the catalytic Nucleophile. Residue 185–190 (GAGETI) participates in NADP(+) binding.

The protein belongs to the glutamyl-tRNA reductase family. Homodimer.

The catalysed reaction is (S)-4-amino-5-oxopentanoate + tRNA(Glu) + NADP(+) = L-glutamyl-tRNA(Glu) + NADPH + H(+). The protein operates within porphyrin-containing compound metabolism; protoporphyrin-IX biosynthesis; 5-aminolevulinate from L-glutamyl-tRNA(Glu): step 1/2. Functionally, catalyzes the NADPH-dependent reduction of glutamyl-tRNA(Glu) to glutamate 1-semialdehyde (GSA). This chain is Glutamyl-tRNA reductase, found in Shewanella oneidensis (strain ATCC 700550 / JCM 31522 / CIP 106686 / LMG 19005 / NCIMB 14063 / MR-1).